The chain runs to 364 residues: Cobalt-precorrin-5B C(1)-methyltransferase (364 aa).

It belongs to the CbiD family.

It catalyses the reaction Co-precorrin-5B + S-adenosyl-L-methionine = Co-precorrin-6A + S-adenosyl-L-homocysteine. It participates in cofactor biosynthesis; adenosylcobalamin biosynthesis; cob(II)yrinate a,c-diamide from sirohydrochlorin (anaerobic route): step 6/10. Catalyzes the methylation of C-1 in cobalt-precorrin-5B to form cobalt-precorrin-6A. In Pseudomonas putida (strain GB-1), this protein is Cobalt-precorrin-5B C(1)-methyltransferase.